A 202-amino-acid polypeptide reads, in one-letter code: Large ribosomal subunit protein bL25 (202 aa).

Residues 1–21 (MSKESYELKAEARERVGKGSS) are disordered.

Belongs to the bacterial ribosomal protein bL25 family. CTC subfamily. Part of the 50S ribosomal subunit; part of the 5S rRNA/L5/L18/L25 subcomplex. Contacts the 5S rRNA. Binds to the 5S rRNA independently of L5 and L18.

This is one of the proteins that binds to the 5S RNA in the ribosome where it forms part of the central protuberance. The protein is Large ribosomal subunit protein bL25 of Agrobacterium fabrum (strain C58 / ATCC 33970) (Agrobacterium tumefaciens (strain C58)).